The chain runs to 343 residues: Phenylalanine--tRNA ligase alpha subunit (343 aa).

A Mg(2+)-binding site is contributed by E264.

The protein belongs to the class-II aminoacyl-tRNA synthetase family. Phe-tRNA synthetase alpha subunit type 1 subfamily. Tetramer of two alpha and two beta subunits. It depends on Mg(2+) as a cofactor.

It is found in the cytoplasm. The catalysed reaction is tRNA(Phe) + L-phenylalanine + ATP = L-phenylalanyl-tRNA(Phe) + AMP + diphosphate + H(+). The polypeptide is Phenylalanine--tRNA ligase alpha subunit (Azoarcus sp. (strain BH72)).